Here is a 119-residue protein sequence, read N- to C-terminus: MRALAFAAALAAFSATAALAAGALEAVQEAPAGSTEVKIAKMKFQTPEVRIKAGSAVTWTNTEALPHNVHFKSGPGVEKDVEGPMLRSNQTYSVKFNAPGTYDYICTPHPFMKGKVVVE.

The signal sequence occupies residues 1–20 (MRALAFAAALAAFSATAALA). A Plastocyanin-like domain is found at 21–119 (AGALEAVQEA…PFMKGKVVVE (99 aa)). Cu cation-binding residues include His-67, Cys-106, His-109, and Met-112.

The cofactor is Cu cation.

The protein resides in the periplasm. It participates in one-carbon metabolism; methylamine degradation. Functionally, primary acceptor of electrons from methylamine dehydrogenase. Passes those electrons on either a soluble cytochrome c or to pseudoazurin. The sequence is that of Amicyanin-alpha (mauC) from Methylorubrum extorquens (strain ATCC 14718 / DSM 1338 / JCM 2805 / NCIMB 9133 / AM1) (Methylobacterium extorquens).